Consider the following 481-residue polypeptide: Glutamate--glyoxylate aminotransferase 1 (481 aa).

Lys291 is modified (N6-(pyridoxal phosphate)lysine). The Peroxisomal targeting signal signature appears at 479–481 (SKM).

Belongs to the class-I pyridoxal-phosphate-dependent aminotransferase family. Alanine aminotransferase subfamily. Homodimer. Pyridoxal 5'-phosphate serves as cofactor. In terms of processing, the N-terminus is blocked. As to expression, mostly expressed in leaves, and, to a lower extent, in shoots, stems, flowers, seedlings and green siliques.

The protein localises to the peroxisome. It catalyses the reaction L-alanine + 2-oxoglutarate = pyruvate + L-glutamate. The catalysed reaction is glyoxylate + L-alanine = glycine + pyruvate. It carries out the reaction glycine + 2-oxoglutarate = glyoxylate + L-glutamate. Its pathway is amino-acid biosynthesis; glycine biosynthesis; glycine from glyoxylate: step 1/1. The protein operates within photosynthesis; C4 acid pathway. It participates in amino-acid degradation; L-alanine degradation via transaminase pathway; pyruvate from L-alanine: step 1/1. Its function is as follows. Catalyzes the glutamate:glyoxylate (GGT or GGAT), alanine:glyoxylate (AGT), alanine:2-oxoglutarate (AKT) and glutamate:pyruvate (GPT) aminotransferase reactions in peroxisomes. Required for abscisic acid (ABA)- and stress-mediated responses in an H(2)O(2)-dependent manner. Functions as a photorespiratory aminotransferase that modulates amino acid content during photorespiration (GGAT activity); promotes serine, glycine and citrulline metabolism in response to light. This chain is Glutamate--glyoxylate aminotransferase 1 (GGAT1), found in Arabidopsis thaliana (Mouse-ear cress).